The sequence spans 121 residues: Protein yippee (121 aa).

Residues 13–110 form the Yippee domain; it reads KLFNCAQCHT…LEYALITEAE (98 aa). 4 residues coordinate Zn(2+): Cys17, Cys20, Cys73, and Cys76.

Belongs to the yippee family. As to quaternary structure, interacts with hemolin.

The protein is Protein yippee of Drosophila melanogaster (Fruit fly).